A 198-amino-acid chain; its full sequence is Endonuclease V (198 aa).

2 residues coordinate Mg(2+): Asp38 and Asp101.

It belongs to the endonuclease V family. Requires Mg(2+) as cofactor.

The protein localises to the cytoplasm. It carries out the reaction Endonucleolytic cleavage at apurinic or apyrimidinic sites to products with a 5'-phosphate.. DNA repair enzyme involved in the repair of deaminated bases. Selectively cleaves double-stranded DNA at the second phosphodiester bond 3' to a deoxyinosine leaving behind the intact lesion on the nicked DNA. This Saccharolobus islandicus (strain M.14.25 / Kamchatka #1) (Sulfolobus islandicus) protein is Endonuclease V.